The following is a 357-amino-acid chain: Aminotransferase TOXF (357 aa).

Position 87 (arginine 87) interacts with pyridoxal 5'-phosphate. An N6-(pyridoxal phosphate)lysine modification is found at lysine 188. Position 227 (glutamate 227) interacts with pyridoxal 5'-phosphate.

The protein belongs to the class-IV pyridoxal-phosphate-dependent aminotransferase family. It depends on pyridoxal 5'-phosphate as a cofactor.

It functions in the pathway mycotoxin biosynthesis; HC-toxin biosynthesis. In terms of biological role, aminotransferase, part of the diffuse TOX2 gene cluster that mediates the biosynthesis of the HC-toxin, cyclic tetrapeptide of structure cyclo(D-Pro-L-Ala-D-Ala-L-Aeo), where Aeo stands for 2-amino-9,10-epoxi-8-oxodecanoic acid. HC-toxin is a determinant of specificity and virulence in the interaction between the producing fungus and its host, maize. TOXF contributes to the synthesis of 2-amino-9,10-epoxi-8-oxodecanoic acid, an essential precursor for the production of the major forms of HC-toxin by the non-ribosomal peptide synthetase HTS1. The sequence is that of Aminotransferase TOXF (TOXF) from Cochliobolus carbonum (Maize leaf spot fungus).